Here is an 82-residue protein sequence, read N- to C-terminus: RNA-binding protein Hfq (82 aa).

The Sm domain occupies 11–71 (DTFLNHVRKT…ISTIMPGAPI (61 aa)).

Belongs to the Hfq family. In terms of assembly, homohexamer.

Its function is as follows. RNA chaperone that binds small regulatory RNA (sRNAs) and mRNAs to facilitate mRNA translational regulation in response to envelope stress, environmental stress and changes in metabolite concentrations. Also binds with high specificity to tRNAs. The sequence is that of RNA-binding protein Hfq from Rhodopseudomonas palustris (strain BisA53).